The sequence spans 428 residues: Divergent protein kinase domain 1A (428 aa).

The Cytoplasmic segment spans residues 1–27 (MARSLCAGAWLRKPHYLQARLSYMRVK). The helical transmembrane segment at 28–48 (YLFFSWLVVFVGSWIIYVQYS) threads the bilayer. The Lumenal portion of the chain corresponds to 49 to 428 (TYTELCRGKD…WKKISYTNDS (380 aa)).

Belongs to the DIPK family. In terms of processing, among the many cysteines in the lumenal domain, most are probably involved in disulfide bonds. In terms of tissue distribution, ubiquitous.

It localises to the endoplasmic reticulum membrane. This chain is Divergent protein kinase domain 1A (Dipk1a), found in Mus musculus (Mouse).